Consider the following 257-residue polypeptide: Acetylglutamate kinase (257 aa).

Residues 43–44, Arg65, and Asn157 each bind substrate; that span reads GG.

This sequence belongs to the acetylglutamate kinase family. ArgB subfamily.

It is found in the cytoplasm. The catalysed reaction is N-acetyl-L-glutamate + ATP = N-acetyl-L-glutamyl 5-phosphate + ADP. It functions in the pathway amino-acid biosynthesis; L-arginine biosynthesis; N(2)-acetyl-L-ornithine from L-glutamate: step 2/4. Catalyzes the ATP-dependent phosphorylation of N-acetyl-L-glutamate. This Actinobacillus succinogenes (strain ATCC 55618 / DSM 22257 / CCUG 43843 / 130Z) protein is Acetylglutamate kinase.